Consider the following 251-residue polypeptide: uncharacterized protein (251 aa).

This is an uncharacterized protein from Methanothermus fervidus.